The following is a 185-amino-acid chain: Ribosome-recycling factor (185 aa).

It belongs to the RRF family.

It is found in the cytoplasm. Functionally, responsible for the release of ribosomes from messenger RNA at the termination of protein biosynthesis. May increase the efficiency of translation by recycling ribosomes from one round of translation to another. This Vibrio parahaemolyticus serotype O3:K6 (strain RIMD 2210633) protein is Ribosome-recycling factor.